Here is a 245-residue protein sequence, read N- to C-terminus: Sec-independent protein translocase protein TatC (245 aa).

6 helical membrane-spanning segments follow: residues 17-37 (FISV…RSYI), 73-93 (FFAA…KFVA), 107-127 (FVSF…FVVV), 159-179 (VVVA…FAKI), 191-207 (FRIA…FMTP), and 210-230 (VLSQ…SILI).

It belongs to the TatC family. As to quaternary structure, the Tat system comprises two distinct complexes: a TatABC complex, containing multiple copies of TatA, TatB and TatC subunits, and a separate TatA complex, containing only TatA subunits. Substrates initially bind to the TatABC complex, which probably triggers association of the separate TatA complex to form the active translocon.

It localises to the cell inner membrane. Part of the twin-arginine translocation (Tat) system that transports large folded proteins containing a characteristic twin-arginine motif in their signal peptide across membranes. Together with TatB, TatC is part of a receptor directly interacting with Tat signal peptides. The chain is Sec-independent protein translocase protein TatC from Campylobacter jejuni subsp. jejuni serotype O:2 (strain ATCC 700819 / NCTC 11168).